Here is a 149-residue protein sequence, read N- to C-terminus: Deoxyuridine 5'-triphosphate nucleotidohydrolase (149 aa).

Residues R68 to G70, N81, and L85 to D87 each bind substrate.

The protein belongs to the dUTPase family. Requires Mg(2+) as cofactor.

It catalyses the reaction dUTP + H2O = dUMP + diphosphate + H(+). It functions in the pathway pyrimidine metabolism; dUMP biosynthesis; dUMP from dCTP (dUTP route): step 2/2. Its function is as follows. This enzyme is involved in nucleotide metabolism: it produces dUMP, the immediate precursor of thymidine nucleotides and it decreases the intracellular concentration of dUTP so that uracil cannot be incorporated into DNA. In Laribacter hongkongensis (strain HLHK9), this protein is Deoxyuridine 5'-triphosphate nucleotidohydrolase.